The following is a 317-amino-acid chain: Ribosomal protein L11 methyltransferase (317 aa).

S-adenosyl-L-methionine is bound by residues threonine 158, glycine 179, aspartate 201, and asparagine 244.

This sequence belongs to the methyltransferase superfamily. PrmA family.

The protein resides in the cytoplasm. It carries out the reaction L-lysyl-[protein] + 3 S-adenosyl-L-methionine = N(6),N(6),N(6)-trimethyl-L-lysyl-[protein] + 3 S-adenosyl-L-homocysteine + 3 H(+). Methylates ribosomal protein L11. This Streptococcus equi subsp. zooepidemicus (strain H70) protein is Ribosomal protein L11 methyltransferase.